Consider the following 341-residue polypeptide: Methionine import ATP-binding protein MetN 2 (341 aa).

Positions 2–241 constitute an ABC transporter domain; the sequence is IEASELTKVY…PKAPLTQEFI (240 aa). 38–45 contributes to the ATP binding site; it reads GYSGAGKS.

Belongs to the ABC transporter superfamily. Methionine importer (TC 3.A.1.24) family. As to quaternary structure, the complex is composed of two ATP-binding proteins (MetN), two transmembrane proteins (MetI) and a solute-binding protein (MetQ).

It is found in the cell membrane. It catalyses the reaction L-methionine(out) + ATP + H2O = L-methionine(in) + ADP + phosphate + H(+). The enzyme catalyses D-methionine(out) + ATP + H2O = D-methionine(in) + ADP + phosphate + H(+). Its function is as follows. Part of the ABC transporter complex MetNIQ involved in methionine import. Responsible for energy coupling to the transport system. This is Methionine import ATP-binding protein MetN 2 from Shouchella clausii (strain KSM-K16) (Alkalihalobacillus clausii).